Consider the following 120-residue polypeptide: Large ribosomal subunit protein uL18 (120 aa).

It belongs to the universal ribosomal protein uL18 family. In terms of assembly, part of the 50S ribosomal subunit; part of the 5S rRNA/L5/L18/L25 subcomplex. Contacts the 5S and 23S rRNAs.

In terms of biological role, this is one of the proteins that bind and probably mediate the attachment of the 5S RNA into the large ribosomal subunit, where it forms part of the central protuberance. This is Large ribosomal subunit protein uL18 from Methylocella silvestris (strain DSM 15510 / CIP 108128 / LMG 27833 / NCIMB 13906 / BL2).